Here is a 405-residue protein sequence, read N- to C-terminus: Imidazolonepropionase (405 aa).

Positions 73 and 75 each coordinate Fe(3+). Residues His-73 and His-75 each coordinate Zn(2+). The 4-imidazolone-5-propanoate site is built by Arg-82, Tyr-145, and His-178. Tyr-145 is an N-formimidoyl-L-glutamate binding site. His-243 lines the Fe(3+) pocket. His-243 lines the Zn(2+) pocket. Gln-246 provides a ligand contact to 4-imidazolone-5-propanoate. Asp-318 contacts Fe(3+). Asp-318 contacts Zn(2+). Asn-320 and Gly-322 together coordinate N-formimidoyl-L-glutamate. Thr-323 serves as a coordination point for 4-imidazolone-5-propanoate.

This sequence belongs to the metallo-dependent hydrolases superfamily. HutI family. The cofactor is Zn(2+). Fe(3+) serves as cofactor.

It localises to the cytoplasm. The enzyme catalyses 4-imidazolone-5-propanoate + H2O = N-formimidoyl-L-glutamate. It functions in the pathway amino-acid degradation; L-histidine degradation into L-glutamate; N-formimidoyl-L-glutamate from L-histidine: step 3/3. Its function is as follows. Catalyzes the hydrolytic cleavage of the carbon-nitrogen bond in imidazolone-5-propanoate to yield N-formimidoyl-L-glutamate. It is the third step in the universal histidine degradation pathway. This chain is Imidazolonepropionase, found in Brucella suis (strain ATCC 23445 / NCTC 10510).